The following is a 122-amino-acid chain: Large ribosomal subunit protein uL14 (122 aa).

Belongs to the universal ribosomal protein uL14 family. In terms of assembly, part of the 50S ribosomal subunit. Forms a cluster with proteins L3 and L19. In the 70S ribosome, L14 and L19 interact and together make contacts with the 16S rRNA in bridges B5 and B8.

In terms of biological role, binds to 23S rRNA. Forms part of two intersubunit bridges in the 70S ribosome. The sequence is that of Large ribosomal subunit protein uL14 from Albidiferax ferrireducens (strain ATCC BAA-621 / DSM 15236 / T118) (Rhodoferax ferrireducens).